Reading from the N-terminus, the 302-residue chain is HTH-type transcriptional regulator GbpR (302 aa).

The HTH lysR-type domain occupies 1–56 (MSHLRMLVMIEEHGQVSAAAAAMNMTQPAASRMLSEMEAIVKSPLCQRASRGVVLT). Residues 16–35 (VSAAAAAMNMTQPAASRMLS) constitute a DNA-binding region (H-T-H motif).

Belongs to the LysR transcriptional regulatory family.

Functionally, activator of the expression of chvE when bound to its inducer and represses its expression in the absence of inducer (L-arabinose, D-fucose or D-galactose). Negatively regulates its own expression. The sequence is that of HTH-type transcriptional regulator GbpR (gbpR) from Rhizobium radiobacter (Agrobacterium tumefaciens).